The sequence spans 306 residues: Aspartate carbamoyltransferase catalytic subunit (306 aa).

2 residues coordinate carbamoyl phosphate: Arg54 and Thr55. Lys83 lines the L-aspartate pocket. Positions 104, 132, and 135 each coordinate carbamoyl phosphate. The L-aspartate site is built by Arg165 and Arg227. Positions 266 and 267 each coordinate carbamoyl phosphate.

Belongs to the aspartate/ornithine carbamoyltransferase superfamily. ATCase family. As to quaternary structure, heterododecamer (2C3:3R2) of six catalytic PyrB chains organized as two trimers (C3), and six regulatory PyrI chains organized as three dimers (R2).

It catalyses the reaction carbamoyl phosphate + L-aspartate = N-carbamoyl-L-aspartate + phosphate + H(+). It functions in the pathway pyrimidine metabolism; UMP biosynthesis via de novo pathway; (S)-dihydroorotate from bicarbonate: step 2/3. Catalyzes the condensation of carbamoyl phosphate and aspartate to form carbamoyl aspartate and inorganic phosphate, the committed step in the de novo pyrimidine nucleotide biosynthesis pathway. This Finegoldia magna (strain ATCC 29328 / DSM 20472 / WAL 2508) (Peptostreptococcus magnus) protein is Aspartate carbamoyltransferase catalytic subunit.